The following is a 177-amino-acid chain: Large ribosomal subunit protein uL6 (177 aa).

Over residues P156–R171 the composition is skewed to basic and acidic residues. Residues P156–K177 form a disordered region.

The protein belongs to the universal ribosomal protein uL6 family. As to quaternary structure, part of the 50S ribosomal subunit.

Its function is as follows. This protein binds to the 23S rRNA, and is important in its secondary structure. It is located near the subunit interface in the base of the L7/L12 stalk, and near the tRNA binding site of the peptidyltransferase center. This chain is Large ribosomal subunit protein uL6, found in Gluconacetobacter diazotrophicus (strain ATCC 49037 / DSM 5601 / CCUG 37298 / CIP 103539 / LMG 7603 / PAl5).